A 582-amino-acid polypeptide reads, in one-letter code: MDGSRRVRATSVLPRYSPPCLFTGHLSTKSNAFCTDSSSLRLSTLQLVKNHMAIHYNKILSAKAAVDCSIPVSVNTSIKYADQQRREKLRKELARCEKEFKLSKSAMQTNSKMNSKFFVNSLQKPSGEPQDQDVFIEEMTRYPSFSKSLIPSSEGLHLSLPESSKMLMSGTQKHASTSPSRHSGCGHGCDRRPRSAHQFQVALAKTPSGDLLEKHSDLFSNKQSPFTPRTLKTEAKSFLSQYRYYTPAKRRKDFSDQRMEAETQTELSSFNSELGTAEKTSSKDSEVNINQVPNYTRNGAEDKIAPLPSQGQNLAWDSIQDGILQQSSERASCKLSTEFSPDSKIYSDEEELLYLSFMENVTDEILKLGLFSNRFLERLFERHIKKNKHHLEEGKMRYLLHGLKVDLGCISEEDPAKQKHFRMLNQLHFQKALISRENEFVSDEETVSHHERQQYQEALDMLSAVPKDENKMFSLPGEFLIPAHKVKHSEGVIIQQVNDETDNEASPWNENNPSVSDSVIDQETSVDVIEGDSDFERAETSRELCCLSTSLSPSGPFPSINGGSNHGKELSTLRIMGMSIED.

Disordered regions lie at residues Leu-167–Arg-192 and Arg-251–Ile-289. Composition is skewed to polar residues over residues Ser-169 to Arg-181 and Glu-262 to Leu-274.

In terms of assembly, found in a complex with CFAP410, NEK1 and SPATA7. Interacts with NEK1. Interacts with RPGRIP1. Interacts with RPGR. Interacts with NPHP4. Interacts with NPHP1. Interacts with AHI1. In terms of tissue distribution, expressed in the retina (at protein level). Expressed in the choroid region and retinal pigment endothelium, within the photoreceptor layer (at protein level).

Its subcellular location is the cytoplasm. The protein localises to the cytoskeleton. The protein resides in the cilium axoneme. It localises to the cilium basal body. It is found in the cell projection. Its subcellular location is the cilium. The protein localises to the photoreceptor outer segment. Involved in the maintenance of both rod and cone photoreceptor cells. Required for photoreceptor-specific localization of proximal connecting cilium (CC) proteins RPGR, AHI1, NPHP1, NPHP4, and RPGRIP1 at the distal CC, a photoreceptor-specific extension of the primary cilium transition zone. Maintenance of protein localization at the photoreceptor-specific distal CC is essential for normal microtubule stability and to prevent photoreceptor degeneration. The chain is Spermatogenesis-associated protein 7 homolog (Spata7) from Mus musculus (Mouse).